Consider the following 173-residue polypeptide: Crossover junction endodeoxyribonuclease RuvC (173 aa).

Catalysis depends on residues aspartate 8, glutamate 67, and aspartate 139. Mg(2+) contacts are provided by aspartate 8, glutamate 67, and aspartate 139.

It belongs to the RuvC family. In terms of assembly, homodimer which binds Holliday junction (HJ) DNA. The HJ becomes 2-fold symmetrical on binding to RuvC with unstacked arms; it has a different conformation from HJ DNA in complex with RuvA. In the full resolvosome a probable DNA-RuvA(4)-RuvB(12)-RuvC(2) complex forms which resolves the HJ. Mg(2+) serves as cofactor.

It localises to the cytoplasm. The enzyme catalyses Endonucleolytic cleavage at a junction such as a reciprocal single-stranded crossover between two homologous DNA duplexes (Holliday junction).. The RuvA-RuvB-RuvC complex processes Holliday junction (HJ) DNA during genetic recombination and DNA repair. Endonuclease that resolves HJ intermediates. Cleaves cruciform DNA by making single-stranded nicks across the HJ at symmetrical positions within the homologous arms, yielding a 5'-phosphate and a 3'-hydroxyl group; requires a central core of homology in the junction. The consensus cleavage sequence is 5'-(A/T)TT(C/G)-3'. Cleavage occurs on the 3'-side of the TT dinucleotide at the point of strand exchange. HJ branch migration catalyzed by RuvA-RuvB allows RuvC to scan DNA until it finds its consensus sequence, where it cleaves and resolves the cruciform DNA. This is Crossover junction endodeoxyribonuclease RuvC from Shewanella baltica (strain OS223).